Reading from the N-terminus, the 151-residue chain is UPF0208 membrane protein YfbV (151 aa).

2 helical membrane-spanning segments follow: residues 46-65 (YAIR…QIAL) and 69-91 (LGPA…WWLG).

Belongs to the UPF0208 family.

The protein localises to the cell inner membrane. This chain is UPF0208 membrane protein YfbV, found in Escherichia coli O1:K1 / APEC.